A 334-amino-acid polypeptide reads, in one-letter code: MPKRRDILAIVLIVLPWTLLITVWHQSTLAPLLAVHKDEGSDPRRETPPGADPREYCTSDRDIVEVVRTEYVYTRPPPWSDTLPTIHVVTPTYSRPVQKAELTRMANTLLHVPNLHWLVVEDAPRRTPLTARLLRDTGLNYTHLHVETPRNYKLRGDARDPRIPRGTMQRNLALRWLRETFPRNSSQPGVVYFADDDNTYSLELFEEMRSTRRVSVWPVAFVGGLRYEAPRVNGAGKVVGWKTVFDPHRPFAIDMAGFAVNLRLILQRSQAYFKLRGVKGGYQESSLLRELVTLNDLEPKAANCTKILVWHTRTEKPVLVNEGKKGFTDPSVEI.

Over 1–6 (MPKRRD) the chain is Cytoplasmic. Residues 3 to 5 (KRR) are essential for transport from endoplasmic reticulum to Golgi apparatus and interaction with SAR1A. Residues 7 to 27 (ILAIVLIVLPWTLLITVWHQS) traverse the membrane as a helical; Signal-anchor for type II membrane protein segment. The Lumenal portion of the chain corresponds to 28–334 (TLAPLLAVHK…KGFTDPSVEI (307 aa)). The interval 37 to 56 (KDEGSDPRRETPPGADPREY) is disordered. Position 91–93 (91–93 (PTY)) interacts with UDP-alpha-D-glucuronate. Thr103 and Thr108 each carry phosphothreonine. Asp122 contacts UDP-alpha-D-glucuronate. An N-linked (GlcNAc...) asparagine glycan is attached at Asn140. 2 residues coordinate UDP-alpha-D-glucuronate: Arg165 and Arg170. A glycan (N-linked (GlcNAc...) asparagine) is linked at Asn184. 195 to 197 (DDD) provides a ligand contact to UDP-alpha-D-glucuronate. Asp197 lines the Mn(2+) pocket. The segment at 245–254 (FDPHRPFAID) is interaction with galactose moiety of substrate glycoprotein. The Proton donor/acceptor role is filled by Glu284. Asn303 carries N-linked (GlcNAc...) asparagine glycosylation. 311–313 (HTR) contributes to the UDP-alpha-D-glucuronate binding site.

It belongs to the glycosyltransferase 43 family. In terms of assembly, homodimer. Interacts with SAR1A. Requires Mn(2+) as cofactor. Post-translationally, the soluble form derives from the membrane form by proteolytic processing. Mainly expressed in the brain.

The protein localises to the golgi apparatus membrane. The protein resides in the secreted. It localises to the endoplasmic reticulum membrane. The catalysed reaction is 3-O-(beta-D-galactosyl-(1-&gt;3)-beta-D-galactosyl-(1-&gt;4)-beta-D-xylosyl)-L-seryl-[protein] + UDP-alpha-D-glucuronate = 3-O-(beta-D-GlcA-(1-&gt;3)-beta-D-Gal-(1-&gt;3)-beta-D-Gal-(1-&gt;4)-beta-D-Xyl)-L-seryl-[protein] + UDP + H(+). It functions in the pathway protein modification; protein glycosylation. Functionally, involved in the biosynthesis of L2/HNK-1 carbohydrate epitope on glycoproteins. Can also play a role in glycosaminoglycan biosynthesis. Substrates include asialo-orosomucoid (ASOR), asialo-fetuin, and asialo-neural cell adhesion molecule. Requires sphingomyelin for activity: stearoyl-sphingomyelin was the most effective, followed by palmitoyl-sphingomyelin and lignoceroyl-sphingomyelin. Activity was demonstrated only for sphingomyelin with a saturated fatty acid and not for that with an unsaturated fatty acid, regardless of the length of the acyl group. This is Galactosylgalactosylxylosylprotein 3-beta-glucuronosyltransferase 1 from Homo sapiens (Human).